A 369-amino-acid chain; its full sequence is Cobalt-precorrin-5B C(1)-methyltransferase (369 aa).

It belongs to the CbiD family.

It catalyses the reaction Co-precorrin-5B + S-adenosyl-L-methionine = Co-precorrin-6A + S-adenosyl-L-homocysteine. Its pathway is cofactor biosynthesis; adenosylcobalamin biosynthesis; cob(II)yrinate a,c-diamide from sirohydrochlorin (anaerobic route): step 6/10. Functionally, catalyzes the methylation of C-1 in cobalt-precorrin-5B to form cobalt-precorrin-6A. The chain is Cobalt-precorrin-5B C(1)-methyltransferase from Methanococcus vannielii (strain ATCC 35089 / DSM 1224 / JCM 13029 / OCM 148 / SB).